The following is a 634-amino-acid chain: Sodium-dependent neutral amino acid transporter B(0)AT1 (634 aa).

The Cytoplasmic portion of the chain corresponds to 1-41 (MVRLVLPNPGLEERIPSLDELEVIEKEEAGSRPKWDNKAQY). Ser17 is subject to Phosphoserine. A helical membrane pass occupies residues 42 to 62 (MLTCVGFCVGLGNVWRFPYLC). The Extracellular segment spans residues 63-67 (QSHGG). The chain crosses the membrane as a helical span at residues 68–88 (GAFMIPFLILLVFEGIPLLYL). At 89-119 (EFAIGQRLRKGSMGVWSSIHPALKGIGIASM) the chain is on the cytoplasmic side. A helical membrane pass occupies residues 120-140 (FVSFMVGLYYNTIIAWVMWYF). Over 141–192 (FNSFQEPLPWSECPLNQNQTGYVEECAKSSSVDYFWYRETLNISTSISDSGS) the chain is Extracellular. Asn158 and Asn182 each carry an N-linked (GlcNAc...) asparagine glycan. Residues 193–213 (IQWWILLCLTCAWSVLYVCII) form a helical membrane-spanning segment. Over 214–221 (RGIETTGK) the chain is Cytoplasmic. A helical membrane pass occupies residues 222-242 (AVYITSTLPYVVLTIFLIRGL). Topologically, residues 243–268 (TLKGATNGIVFLFTPNITELSNPNTW) are extracellular. N-linked (GlcNAc...) asparagine glycosylation is present at Asn258. A helical membrane pass occupies residues 269–289 (LDAGAQVFYSFSLAFGGLISF). Residues 290–304 (SSYNSVHNNCEMDSV) are Cytoplasmic-facing. Residues 305 to 325 (IVSVINGFTSVYAATVVYSII) traverse the membrane as a helical segment. At 326-413 (GFRATERFDD…TEAITKMPVS (88 aa)) the chain is on the extracellular side. N-linked (GlcNAc...) asparagine glycosylation is found at Asn354 and Asn368. Residues 414–434 (PLWSVLFFIMLFCLGLSSMFG) form a helical membrane-spanning segment. The Cytoplasmic segment spans residues 435–456 (NMEGVVVPLQDLNITPKKWPKE). Residues 457-477 (LLTGLICLGTYLIAFIFTLNS) traverse the membrane as a helical segment. Residues 478-487 (GQYWLSLLDS) lie on the Extracellular side of the membrane. A helical membrane pass occupies residues 488–508 (FAGSIPLLIIAFCEMFAVVYV). Over 509–531 (YGVDRFNKDIEFMIGHKPNIFWQ) the chain is Cytoplasmic. The chain crosses the membrane as a helical span at residues 532–552 (VTWRVVSPLIMLVIFLFFFVI). Topologically, residues 553–581 (EVNKTLMYSIWDPNYEEFPKSQKIPYPNW) are extracellular. N-linked (GlcNAc...) asparagine glycosylation occurs at Asn555. The chain crosses the membrane as a helical span at residues 582–602 (VYAVVVTVAGVPCLSIPCFAI). Residues 603–634 (YKFIRNCCQKSDDHHGLVNTLSTASVNGDLKN) are Cytoplasmic-facing. Residue Ser627 is modified to Phosphoserine.

The protein belongs to the sodium:neurotransmitter symporter (SNF) (TC 2.A.22) family. SLC6A19 subfamily. In terms of assembly, interacts in a tissue-specific manner with ACE2 in small intestine and with CLTRN in the kidney. Interacts with CLTRN; this interaction is required for trafficking of SLC6A19 to the plasma membrane and for its catalytic activation in kidneys. Interacts with ACE2; this interaction is required for trafficking of SLC6A19 to the plasma membrane and for its catalytic activation in intestine. Interacts with ANPEP; the interaction positively regulates its amino acid transporter activity. In terms of tissue distribution, predominantly expressed in kidney and small intestine (at protein level). Expressed in the intestinal brush border (at protein level). Expression not observed in other organs, such as lung, skeletal muscle, brain, liver and pancreas. In kidney, expression is localized in the renal cortex but not in the medulla. Substantial amounts of expression in the proximal tubules. The distal nephron segments and the glomeruli are consistently negative. In the small intestine, expression is exclusively localized in villus enterocytes. High resolution of the hybridization-positive villi reveals a gradient of expression with the highest levels in apical cells. Not detected in crypt cells or in any other cell types of the small intestine.

It localises to the cell membrane. The catalysed reaction is L-alanine(in) + Na(+)(in) = L-alanine(out) + Na(+)(out). The enzyme catalyses L-cysteine(in) + Na(+)(in) = L-cysteine(out) + Na(+)(out). It catalyses the reaction L-glutamine(in) + Na(+)(in) = L-glutamine(out) + Na(+)(out). It carries out the reaction glycine(in) + Na(+)(in) = glycine(out) + Na(+)(out). The catalysed reaction is L-isoleucine(in) + Na(+)(in) = L-isoleucine(out) + Na(+)(out). The enzyme catalyses L-leucine(in) + Na(+)(in) = L-leucine(out) + Na(+)(out). It catalyses the reaction L-methionine(in) + Na(+)(in) = L-methionine(out) + Na(+)(out). It carries out the reaction L-phenylalanine(in) + Na(+)(in) = L-phenylalanine(out) + Na(+)(out). The catalysed reaction is L-serine(in) + Na(+)(in) = L-serine(out) + Na(+)(out). The enzyme catalyses L-tryptophan(in) + Na(+)(in) = L-tryptophan(out) + Na(+)(out). It catalyses the reaction L-tyrosine(in) + Na(+)(in) = L-tyrosine(out) + Na(+)(out). It carries out the reaction L-valine(in) + Na(+)(in) = L-valine(out) + Na(+)(out). Its function is as follows. Transporter that mediates resorption of neutral amino acids across the apical membrane of renal and intestinal epithelial cells. This uptake is sodium-dependent and chloride-independent. Requires CLTRN in kidney or ACE2 in intestine for cell surface expression and amino acid transporter activity. The sequence is that of Sodium-dependent neutral amino acid transporter B(0)AT1 (Slc6a19) from Mus musculus (Mouse).